Reading from the N-terminus, the 618-residue chain is MEGLIQTRGILSLPAKPIGVRRLLQPSHGLKQRLFTTNLPALSLSSNGHKKFQAFQQIPLGISVSHKERSRGFICKAEAAAAGGGNVFDEGDTAAMAVSPKIFGVEVTTLKKIVPLGLMFFCILFNYTILRDTKDVLVVTAKGSSAEIIPFLKTWVNLPMAIGFMLLYTKLSNVLSKKALFYTVIVPFIVYFGAFGFVMYPLSNLIHPEALADKLLATLGPRFMGPLAIMRIWSFCLFYVMAELWGSVVVSVLFWGFANQITTVDEAKKFYPLFGLGANVALIFSGRTVKYFSNMRKNLGPGVDGWAVSLKAMMSIVVGMGLAICFLYWWVNRYVPLPTRSKKKKVKPQMGTMESLKFLVSSPYIRDLATLVVAYGISINLVEVTWKSKLKAQFPSPNEYSAFMGDFSTCTGIATFTMMLLSQYVFKKYGWGVAAKITPTVLLLTGVAFFSLILFGGPFAPLVAKLGMTPLLAAVYVGALQNIFSKSAKYSLFDPCKEMAYIPLDEDTKVKGKAAIDVVCNPLGKSGGALIQQFMILTFGSLANSTPYLGVILLGIVTAWLAAAKSLEGQFNTLMSEEELEREMERASSVKIPVVSQEDAPSGETTSQLSEKSTPTGI.

The N-terminal 76 residues, 1 to 76 (MEGLIQTRGI…KERSRGFICK (76 aa)), are a transit peptide targeting the chloroplast. Alanine 77 carries the post-translational modification N-acetylalanine. 11 helical membrane-spanning segments follow: residues 110-130 (LKKI…YTIL), 148-168 (IIPF…MLLY), 179-199 (ALFY…GFVM), 237-257 (LFYV…FWGF), 270-289 (FYPL…GRTV), 312-332 (AMMS…WWVN), 368-388 (LATL…TWKS), 401-421 (SAFM…MMLL), 441-461 (VLLL…PFAP), 464-484 (AKLG…QNIF), and 542-562 (LANS…AWLA). Residues 586–618 (RASSVKIPVVSQEDAPSGETTSQLSEKSTPTGI) are disordered. Residues 603–618 (GETTSQLSEKSTPTGI) show a composition bias toward polar residues.

This sequence belongs to the ADP/ATP translocase tlc (TC 2.A.12.2) family.

The protein localises to the plastid. It is found in the chloroplast membrane. This is ADP,ATP carrier protein 2, chloroplastic (AATP2) from Arabidopsis thaliana (Mouse-ear cress).